The chain runs to 528 residues: Light-independent protochlorophyllide reductase subunit B (528 aa).

A [4Fe-4S] cluster-binding site is contributed by Asp-36. Asp-274 serves as the catalytic Proton donor. Substrate is bound at residue 409 to 410 (GL). Residues 429–471 (GPSHHGGHAPKPMHDAPAASAAAGAEASMAEETAAPSQDAPAA) are disordered. Over residues 444–465 (APAASAAAGAEASMAEETAAPS) the composition is skewed to low complexity.

Belongs to the ChlB/BchB/BchZ family. Protochlorophyllide reductase is composed of three subunits; BchL, BchN and BchB. Forms a heterotetramer of two BchB and two BchN subunits. [4Fe-4S] cluster is required as a cofactor.

It carries out the reaction chlorophyllide a + oxidized 2[4Fe-4S]-[ferredoxin] + 2 ADP + 2 phosphate = protochlorophyllide a + reduced 2[4Fe-4S]-[ferredoxin] + 2 ATP + 2 H2O. It functions in the pathway porphyrin-containing compound metabolism; bacteriochlorophyll biosynthesis (light-independent). Its function is as follows. Component of the dark-operative protochlorophyllide reductase (DPOR) that uses Mg-ATP and reduced ferredoxin to reduce ring D of protochlorophyllide (Pchlide) to form chlorophyllide a (Chlide). This reaction is light-independent. The NB-protein (BchN-BchB) is the catalytic component of the complex. This chain is Light-independent protochlorophyllide reductase subunit B, found in Dinoroseobacter shibae (strain DSM 16493 / NCIMB 14021 / DFL 12).